Reading from the N-terminus, the 671-residue chain is Pescadillo homolog (671 aa).

Residues 317 to 403 (KVRELFRGLT…LMLPVTGYRI (87 aa)) enclose the BRCT domain. Residues 548-584 (QALRKAQEKSRQTETSEARLQRKMSEVKRQEAATRKM) are a coiled coil. 2 disordered regions span residues 552-578 (KAQE…KRQE) and 643-671 (RRQR…KWVQ).

Belongs to the pescadillo family.

It is found in the nucleus. The protein localises to the nucleolus. It localises to the nucleoplasm. In terms of biological role, required for maturation of ribosomal RNAs and formation of the large ribosomal subunit. This chain is Pescadillo homolog, found in Leishmania infantum.